The chain runs to 764 residues: DNA-binding protein SATB1 (764 aa).

Over residues 1–15 (MDHLNEATQGKEHSE) the composition is skewed to basic and acidic residues. Positions 1 to 56 (MDHLNEATQGKEHSEMSNNVSDPKGPPAKIARLEQNGSPLGRGRLGSTGGKMQGVP) are disordered. Residues 20 to 40 (VSDPKGPPAKIARLEQNGSPL) carry the Nuclear localization signal motif. Gly residues predominate over residues 43–52 (GRLGSTGGKM). Lysine 51 participates in a covalent cross-link: Glycyl lysine isopeptide (Lys-Gly) (interchain with G-Cter in SUMO2). Residues 71–172 (GTMLPVFCVV…VVTLKIQLHS (102 aa)) enclose the CMP domain. N6-acetyllysine is present on lysine 136. Positions 139-143 (PVPLS) match the Protein interaction motif. Residues 175–248 (KLEDLPPEQW…WYKHFKKTKD (74 aa)) enclose the CUTL domain. Residue serine 185 is modified to Phosphoserine. A nuclear matrix targeting sequence (NMTS) region spans residues 224 to 278 (YYANVSAAKCQEFGRWYKHFKKTKDMMVEMDSLSELSQQGANHVNFGQQPVPGNT). The short motif at 224 to 278 (YYANVSAAKCQEFGRWYKHFKKTKDMMVEMDSLSELSQQGANHVNFGQQPVPGNT) is the Nuclear matrix targeting sequence (NMTS) element. Polar residues predominate over residues 266-296 (HVNFGQQPVPGNTAEQPPSPAQLSHGSQPSV). The tract at residues 266-307 (HVNFGQQPVPGNTAEQPPSPAQLSHGSQPSVRTPLPNLHPGL) is disordered. The segment at residues 361–448 (LEQQVSTNTE…ERDRIYQDER (88 aa)) is a DNA-binding region (CUT 1). Residues glutamine 390, 400-410 (RTQGLLSEILR), and asparagine 425 contribute to the DNA site. The interval 450–474 (RSLNAASAMGPAPLLSTPPSRPPQV) is disordered. The segment at residues 484–571 (NGKPENNTMN…ERDAIYEQES (88 aa)) is a DNA-binding region (CUT 2). Residues 591 to 650 (QIQQQQQQQQQQQQQQQPPPPPPQPQPQPQAGPRLPPRQPTVASSAESDEENRQKTRPRT) form a disordered region. Low complexity predominate over residues 593-606 (QQQQQQQQQQQQQQ). The segment covering 607–629 (QPPPPPPQPQPQPQAGPRLPPRQ) has biased composition (pro residues). Residue serine 638 is modified to Phosphoserine. The segment at residues 646–705 (TRPRTKISVEALGILQSFIQDVGLYPDEEAIQTLSAQLDLPKYTIIKFFQNQRYYLKHHG) is a DNA-binding region (homeobox). Lysine 745 is covalently cross-linked (Glycyl lysine isopeptide (Lys-Gly) (interchain with G-Cter in SUMO)).

The protein belongs to the CUT homeobox family. In terms of assembly, interacts with PCAF. Interacts with sumoylated PML and HDAC1 Tat via the CMP domain. Also interacts with DYNLT3 and POLR2J2. Binds to EP300. Homodimer. Part of the nuclear protein complex gamma-globin promoter and enhancer binding factor (gamma-PE) composed at least of SATB1 and HOXB2. Interaction with CtBP1 when not acetylated stabilizes attachment to DNA and promotes transcription repression. Interacts with CUX1 (via DNA-binding domains); the interaction inhibits the attachment of both proteins to DNA. Post-translationally, sumoylated. Sumoylation promotes cleavage by caspases. In terms of processing, phosphorylated by PKC. Acetylated by PCAF. Phosphorylated form interacts with HDAC1, but unphosphorylated form interacts with PCAF. DNA binding properties are activated by phosphorylation and inactivated by acetylation. In opposition, gene expression is down-regulated by phosphorylation but up-regulated by acetylation. Cleaved at Asp-254 by caspase-3 and caspase-6 during T-cell apoptosis in thymus and during B-cell stimulation. The cleaved forms cannot dimerize and lose transcription regulation function because of impaired DNA and chromatin association. In terms of tissue distribution, expressed in the subventricular zone, rostral migratory stream and in the olfactory bulb (at protein level). Mainly expressed in thymus, spleen, and lymph nodes with a lower level observed in the brain.

It is found in the nucleus. The protein resides in the PML body. Functionally, required for the switching of fetal globin species, and beta- and gamma-globin genes regulation during erythroid differentiation. Plays a role in chromatin organization and nuclear architecture during apoptosis. Crucial silencing factor contributing to the initiation of X inactivation mediated by Xist RNA that occurs during embryogenesis and in lymphoma. Binds to DNA at special AT-rich sequences, the consensus SATB1-binding sequence (CSBS), at nuclear matrix- or scaffold-associated regions. Thought to recognize the sugar-phosphate structure of double-stranded DNA. Transcriptional repressor controlling nuclear and viral gene expression in a phosphorylated and acetylated status-dependent manner, by binding to matrix attachment regions (MARs) of DNA and inducing a local chromatin-loop remodeling. Acts as a docking site for several chromatin remodeling enzymes and also by recruiting corepressors (HDACs) or coactivators (HATs) directly to promoters and enhancers. Modulates genes that are essential in the maturation of the immune T-cell CD8SP from thymocytes. Promotes neuronal differentiation of neural stem/progenitor cells in the adult subventricular zone, possibly by positively regulating the expression of NEUROD1. This chain is DNA-binding protein SATB1 (Satb1), found in Mus musculus (Mouse).